Reading from the N-terminus, the 356-residue chain is UDP-N-acetylglucosamine--N-acetylmuramyl-(pentapeptide) pyrophosphoryl-undecaprenol N-acetylglucosamine transferase (356 aa).

The UDP-N-acetyl-alpha-D-glucosamine site is built by Arg-166, Ser-196, and Gln-290.

This sequence belongs to the glycosyltransferase 28 family. MurG subfamily.

The protein localises to the cell membrane. It catalyses the reaction Mur2Ac(oyl-L-Ala-gamma-D-Glu-L-Lys-D-Ala-D-Ala)-di-trans,octa-cis-undecaprenyl diphosphate + UDP-N-acetyl-alpha-D-glucosamine = beta-D-GlcNAc-(1-&gt;4)-Mur2Ac(oyl-L-Ala-gamma-D-Glu-L-Lys-D-Ala-D-Ala)-di-trans,octa-cis-undecaprenyl diphosphate + UDP + H(+). The protein operates within cell wall biogenesis; peptidoglycan biosynthesis. Cell wall formation. Catalyzes the transfer of a GlcNAc subunit on undecaprenyl-pyrophosphoryl-MurNAc-pentapeptide (lipid intermediate I) to form undecaprenyl-pyrophosphoryl-MurNAc-(pentapeptide)GlcNAc (lipid intermediate II). In Staphylococcus aureus (strain USA300), this protein is UDP-N-acetylglucosamine--N-acetylmuramyl-(pentapeptide) pyrophosphoryl-undecaprenol N-acetylglucosamine transferase.